The sequence spans 175 residues: Large ribosomal subunit protein eL14 (175 aa).

Residues 150–175 (KAAKMDSTEGAKRRMQKAIAARKAKK) form a disordered region. The segment covering 152–161 (AKMDSTEGAK) has biased composition (basic and acidic residues). The span at 162–175 (RRMQKAIAARKAKK) shows a compositional bias: basic residues.

Belongs to the eukaryotic ribosomal protein eL14 family.

Its function is as follows. Component of the large ribosomal subunit. The ribosome is a large ribonucleoprotein complex responsible for the synthesis of proteins in the cell. The polypeptide is Large ribosomal subunit protein eL14 (RPL14) (Leishmania donovani).